Consider the following 1133-residue polypeptide: DNA repair protein rad8 (1133 aa).

2 disordered regions span residues 1–34 (MKRKVQKIIDEAPLEENSPPRFFDSDVEADSKPN) and 392–413 (PEARDESNSDLTPSSTEDEEDV). Phosphoserine is present on Ser18. In terms of domain architecture, Helicase ATP-binding spans 516 to 705 (PNSMPYHRGG…YSLIKFMRYE (190 aa)). Residue 529–536 (DEMGLGKT) coordinates ATP. Positions 656-659 (DEGH) match the DEGH box motif. Residues 877-923 (CPICCNEPIQNPLLLNCKHACCGDCLSEHIQYQKRRNIIPPLCHTCR) form an RING-type zinc finger. A Helicase C-terminal domain is found at 971 to 1125 (QLRQLTHSSE…EGKQQVQSIE (155 aa)).

Belongs to the SNF2/RAD54 helicase family.

The protein localises to the cytoplasm. It localises to the nucleus. Its function is as follows. Probable helicase, member of the UBC2/RAD6 epistasis group. Functions with DNA repair protein rad18 in error-free postreplication DNA repair. Involved in the maintenance of wild-type rates of instability of simple repetitive sequences such as poly(GT) repeats. Plays a role in surviving topoisomerase-mediated DNA damage. The chain is DNA repair protein rad8 from Schizosaccharomyces pombe (strain 972 / ATCC 24843) (Fission yeast).